The chain runs to 382 residues: F-box protein At3g19470 (382 aa).

An F-box domain is found at 1–44 (MYNLPRDLPEEVLCRIPLTSLRPVRSTCKKWSTLSKCGSFAKKH).

This is F-box protein At3g19470 from Arabidopsis thaliana (Mouse-ear cress).